The sequence spans 640 residues: Threonine--tRNA ligase (640 aa).

A TGS domain is found at 1–61 (MPTITLPDGS…ENDASLQIIT (61 aa)). A catalytic region spans residues 242–533 (DHRKIGKRLG…LIEHYEGAFP (292 aa)). Zn(2+)-binding residues include Cys333, His384, and His510.

The protein belongs to the class-II aminoacyl-tRNA synthetase family. As to quaternary structure, homodimer. Requires Zn(2+) as cofactor.

The protein localises to the cytoplasm. The catalysed reaction is tRNA(Thr) + L-threonine + ATP = L-threonyl-tRNA(Thr) + AMP + diphosphate + H(+). In terms of biological role, catalyzes the attachment of threonine to tRNA(Thr) in a two-step reaction: L-threonine is first activated by ATP to form Thr-AMP and then transferred to the acceptor end of tRNA(Thr). Also edits incorrectly charged L-seryl-tRNA(Thr). The protein is Threonine--tRNA ligase of Pseudomonas syringae pv. tomato (strain ATCC BAA-871 / DC3000).